The primary structure comprises 150 residues: HTH-type transcriptional regulator LrpA (150 aa).

The HTH asnC-type domain occupies leucine 5–leucine 66. The H-T-H motif DNA-binding region spans leucine 24 to arginine 43. L-phenylalanine contacts are provided by valine 100, glycine 102, and glutamate 104.

In terms of assembly, homohexadecamer in the absence of any added ligand. Homooctamer. Tetramer of dimers. In the presence of phenylalanine, the hexadecamer dissociates into an octamer, which further dissociates partially into lower-order oligomers.

The DNA-binding activity of LrpA is modulated by interaction of LrpA with various effector molecules, including amino acids and vitamins. The DNA binding affinity is decreased by several amino acids, including phenylalanine, tyrosine, tryptophan, histidine, leucine and aspartate. Preferentially binds to aromatic amino acids. Besides amino acids, the binding affinity is also reduced by vitamins, including B1, B3, B6, VC, B7, B9, B12, VA and VK3. Functionally, transcriptional regulator that probably plays an important role in M.tuberculosis persistence. Regulates the expression of several genes, including lat, rsmG, whiB2, lsr2 and Rv2011c. Acts by binding directly to the promoter region of the target genes. In Mycobacterium tuberculosis (strain ATCC 25618 / H37Rv), this protein is HTH-type transcriptional regulator LrpA.